We begin with the raw amino-acid sequence, 203 residues long: MKKMAIACALLSSVVASSVWADAVSSLKSRLDKVSSFHATFTQKVTDGSGAAVQEGQGDLWVKRPNLFNWHMTQPDESILVSDGKTLWFYNPFVEQATATWLKDATGNTPFMLIARNQASDWQQYNIKQDGDNFVLTPKASNGNLKQFTINVGRDGTIHQFSAVEQDDQRSAYQLKSQQNGAVDPSKFTFTPPQGVTIDDQRK.

Residues 1 to 21 (MKKMAIACALLSSVVASSVWA) form the signal peptide. The segment at 178–203 (QQNGAVDPSKFTFTPPQGVTIDDQRK) is disordered.

The protein belongs to the LolA family. Monomer.

It localises to the periplasm. Participates in the translocation of lipoproteins from the inner membrane to the outer membrane. Only forms a complex with a lipoprotein if the residue after the N-terminal Cys is not an aspartate (The Asp acts as a targeting signal to indicate that the lipoprotein should stay in the inner membrane). In Salmonella paratyphi A (strain ATCC 9150 / SARB42), this protein is Outer-membrane lipoprotein carrier protein.